Reading from the N-terminus, the 564-residue chain is MEKSSSNFIQNGKRDHGGKLRQYNYKLEEAEYRYFTEERLFYRRRNPVEKIAQRIPKPQIEGTFTWSDELRCNYDGNTQFLPVEALEGCLPLEKLNQHLKPGFRLEVVVRPSLDPSITTKSPEIRWFGEVTAVCGFYVAIKFVGELNRRPCWFHMLSEDIFDIGSGLKQDPAMKWLQYRPLSLLKPMQCPKFWRRGSTPAPPVPRPTEEILDEFQAELHENRISEPKIFDQLRHLAHRPSRFRLNQRVELLNYLEPTEIRVARILRILGRRLMVMVTAQDYPEDLPSVEAKDRQVQHENVEFWVDESSFFLFPVGFAMINGLRTKATEGYLEHSRRIAEGSGSYHKDDVTFEQLFAGKPDISAEKLNLLKVGQKFELLDPLSDLRQSFCVATIRKICKTPGFLIISPDETESDDESFPIHIDNHFMHPVGYAEKFGIKLDRLAGTEPGKFKWEGYLKEKQAEKIPDEMLRPLPSKERRHMFEFGRVLEAVGQNETYWISPASVEEVHGRTVLIEFQGWDSEFSELYDMDSHDLLPAGWCEFFNFKLRHPVLPVNDPNAENGEYD.

4 MBT repeats span residues 64–176 (FTWS…MKWL), 205–327 (RPTE…TKAT), 331–442 (LEHS…LDRL), and 450–549 (FKWE…LRHP).

As to quaternary structure, interacts with histone H3 that is trimethylated at 'Lys-9' (H3K9me3).

This chain is Malignant brain tumor repeat protein 1 (mbtr-1), found in Caenorhabditis elegans.